Here is a 75-residue protein sequence, read N- to C-terminus: Small ribosomal subunit protein bS18 (75 aa).

Belongs to the bacterial ribosomal protein bS18 family. Part of the 30S ribosomal subunit. Forms a tight heterodimer with protein bS6.

Functionally, binds as a heterodimer with protein bS6 to the central domain of the 16S rRNA, where it helps stabilize the platform of the 30S subunit. This is Small ribosomal subunit protein bS18 from Mycoplasma mycoides subsp. mycoides SC (strain CCUG 32753 / NCTC 10114 / PG1).